The sequence spans 1514 residues: Neuropathy target esterase sws (1514 aa).

Over 1–34 the chain is Lumenal; the sequence is MDVLELLRASATGSYTALFSDAWCQYVSKQITNS. The helical transmembrane segment at 35-55 threads the bilayer; sequence MYLYCALGVLSMVFLAWFMYF. Topologically, residues 56–1514 are cytoplasmic; the sequence is KRLARIRLRD…KGGAYNETKN (1459 aa). Residue 175-302 coordinates a nucleoside 3',5'-cyclic phosphate; the sequence is IFGHFEKPVF…IRVIQVIMIR (128 aa). The span at 337-352 shows a compositional bias: polar residues; the sequence is STHSSQCSRQTGSQPT. The tract at residues 337–418 is disordered; it reads STHSSQCSRQ…NPNPDVINTS (82 aa). A compositionally biased stretch (low complexity) spans 356 to 374; sequence PAPTCSNTTTTASPTTANT. Position 457 is a phosphoserine (S457). A nucleoside 3',5'-cyclic phosphate is bound by residues 515–644 and 633–760; these read ELGL…VVRR and IVLD…LSHR. A PNPLA domain is found at 987–1153; it reads LVLGGGGARG…VNNLPGQLWR (167 aa). The GXGXXG signature appears at 991-996; the sequence is GGGARG. A GXSXG motif is present at residues 1018–1022; that stretch reads GVSIG. The active-site Nucleophile is S1020. D1140 functions as the Proton acceptor in the catalytic mechanism. The DGA/G motif lies at 1140-1142; sequence DGG. Position 1234 is a phosphoserine (S1234). The segment at 1409–1514 is disordered; sequence EKSIHSAATS…KGGAYNETKN (106 aa). 2 stretches are compositionally biased toward basic and acidic residues: residues 1425-1449 and 1456-1470; these read RSRE…ETER and LDRK…KEPE. Residues 1471-1489 are compositionally biased toward acidic residues; that stretch reads QEQELETEEPNQENTEVEE.

This sequence belongs to the NTE family. In terms of assembly, interacts with Pka-C3; interaction inhibits the catalytic function of Pka-C3 and the esterase activity of sws.

It is found in the endoplasmic reticulum membrane. It carries out the reaction a 1-acyl-sn-glycero-3-phosphocholine + H2O = sn-glycerol 3-phosphocholine + a fatty acid + H(+). In terms of biological role, phospholipase B that deacylates intracellular phosphatidylcholine (PtdCho), generating glycerophosphocholine (GroPtdCho). This deacylation occurs at both sn-2 and sn-1 positions of PtdCho. Its specific chemical modification by certain organophosphorus (OP) compounds leads to distal axonopathy. Plays a role in the signaling mechanism between neurons and glia that regulates glia wrapping during development of the adult brain. Essential for membrane lipid homeostasis and cell survival in both neurons and glia of the adult brain. This is Neuropathy target esterase sws from Drosophila ananassae (Fruit fly).